The sequence spans 127 residues: Apolipoprotein C-IV (127 aa).

The N-terminal stretch at methionine 1–cysteine 27 is a signal peptide. Residue asparagine 63 is glycosylated (N-linked (GlcNAc...) asparagine).

The protein belongs to the apolipoprotein C4 family. As to expression, expressed by the liver and secreted in plasma.

It localises to the secreted. May participate in lipoprotein metabolism. This Homo sapiens (Human) protein is Apolipoprotein C-IV (APOC4).